Here is a 522-residue protein sequence, read N- to C-terminus: ATP synthase subunit alpha (522 aa).

176–183 provides a ligand contact to ATP; the sequence is GDRQTGKT.

The protein belongs to the ATPase alpha/beta chains family. In terms of assembly, F-type ATPases have 2 components, CF(1) - the catalytic core - and CF(0) - the membrane proton channel. CF(1) has five subunits: alpha(3), beta(3), gamma(1), delta(1), epsilon(1). CF(0) has four main subunits: a(1), b(1), b'(1) and c(9-12).

It is found in the cell membrane. The catalysed reaction is ATP + H2O + 4 H(+)(in) = ADP + phosphate + 5 H(+)(out). Produces ATP from ADP in the presence of a proton gradient across the membrane. The alpha chain is a regulatory subunit. This is ATP synthase subunit alpha from Chloroflexus aurantiacus (strain ATCC 29366 / DSM 635 / J-10-fl).